Reading from the N-terminus, the 282-residue chain is Undecaprenyl-diphosphatase (282 aa).

7 consecutive transmembrane segments (helical) span residues 45-65 (AFME…VVFI), 86-106 (WQLW…GIPL), 114-134 (FHNF…FILI), 151-171 (LPYK…FPGT), 196-216 (FFLG…KFIL), 224-244 (GQLT…MYVI), and 256-276 (FTVF…YWVF).

It belongs to the UppP family.

The protein resides in the cell membrane. The catalysed reaction is di-trans,octa-cis-undecaprenyl diphosphate + H2O = di-trans,octa-cis-undecaprenyl phosphate + phosphate + H(+). Its function is as follows. Catalyzes the dephosphorylation of undecaprenyl diphosphate (UPP). Confers resistance to bacitracin. The chain is Undecaprenyl-diphosphatase from Streptococcus gordonii (strain Challis / ATCC 35105 / BCRC 15272 / CH1 / DL1 / V288).